The sequence spans 1047 residues: Suppression of tumorigenicity 18 protein (1047 aa).

Disordered regions lie at residues 41–92 (TAED…HSTA), 168–221 (FLIH…VPKY), and 251–286 (DSETERKDPQNALAEPLDGNAQPSFPDVEEEDSESL). Basic residues predominate over residues 52–65 (NKRKSLLMKPRHYS). Over residues 171–181 (HSDDGRDKIDD) the composition is skewed to basic and acidic residues. 2 consecutive CCHHC-type zinc fingers follow at residues 359 to 402 (PRPE…PLEI) and 403 to 446 (LAMH…KLAM). Zn(2+) is bound by residues cysteine 368, cysteine 373, histidine 386, cysteine 392, cysteine 412, cysteine 417, histidine 430, and cysteine 436. Disordered regions lie at residues 523–563 (GRKT…SYSY) and 672–710 (YSKTHGKTEEEKEKDPVSSLENLEEKKFPGEASIPSPKP). A compositionally biased stretch (polar residues) spans 550 to 563 (AHTQSPGRASSYSY). The span at 677 to 687 (GKTEEEKEKDP) shows a compositional bias: basic and acidic residues. 4 CCHHC-type zinc fingers span residues 715–758 (RDLK…LKSL), 759–802 (MAAN…GVKM), 807–850 (EEKE…QKEN), and 860–903 (KLNK…IKKG). Zn(2+) is bound by residues cysteine 724, cysteine 729, histidine 742, cysteine 748, cysteine 768, cysteine 773, histidine 786, cysteine 792, cysteine 816, cysteine 821, histidine 834, cysteine 840, cysteine 869, cysteine 874, histidine 887, and cysteine 893. Residues 920 to 992 (IESDEEIRHL…AGLSQALISS (73 aa)) adopt a coiled-coil conformation.

It belongs to the MYT1 family. As to expression, detected at low levels in heart, liver, kidney, skeletal muscle, pancreas, testis, ovary and prostate. Detected at even lower levels in mammary epithelial cells and breast cancer cells.

Its subcellular location is the nucleus. In terms of biological role, repressor that binds to DNA sequences containing a bipartite element consisting of a direct repeat of the sequence 5'-AAAGTTT-3' separated by 2-9 nucleotides. Represses basal transcription activity from target promoters. Inhibits colony formation in cultured breast cancer cells. This Homo sapiens (Human) protein is Suppression of tumorigenicity 18 protein (ST18).